A 318-amino-acid chain; its full sequence is Glutathione synthetase (318 aa).

Residues 129 to 314 enclose the ATP-grasp domain; it reads KLAITEFPDL…VPEMFAVALE (186 aa). Position 155-211 (155-211) interacts with ATP; the sequence is HAAQGDVIVKPLDGMGGTGIFRLQRSEPNLNAILETLTDNGTRTIMAQRYIPEIVKG. 2 residues coordinate Mg(2+): E285 and N287.

The protein belongs to the prokaryotic GSH synthase family. Mg(2+) serves as cofactor. Mn(2+) is required as a cofactor.

It catalyses the reaction gamma-L-glutamyl-L-cysteine + glycine + ATP = glutathione + ADP + phosphate + H(+). The protein operates within sulfur metabolism; glutathione biosynthesis; glutathione from L-cysteine and L-glutamate: step 2/2. This chain is Glutathione synthetase, found in Bordetella bronchiseptica (strain ATCC BAA-588 / NCTC 13252 / RB50) (Alcaligenes bronchisepticus).